A 326-amino-acid chain; its full sequence is Transformer-2 protein homolog (326 aa).

2 disordered regions span residues 1 to 114 and 179 to 326; these read MEVA…PSNV and LHGK…SYRR. A compositionally biased stretch (basic and acidic residues) spans 38–55; it reads RDSRERSPPRGNSRERSP. Residues 56–85 are compositionally biased toward low complexity; the sequence is PRGGSPNRGGSPNRGGSPNRGGSPNRGGSP. A compositionally biased stretch (polar residues) spans 104–113; it reads RLANTASPSN. Residues 113-191 enclose the RRM domain; it reads NVLGVFGLAP…KSIRTDFSAT (79 aa). Residues 220–239 are compositionally biased toward gly residues; sequence YGGGDRYGRGDYGGRGGGGD. Over residues 240 to 326 the composition is skewed to basic and acidic residues; the sequence is RYGRDDRGGD…DERPRDSYRR (87 aa).

This sequence belongs to the splicing factor SR family.

It localises to the nucleus. Functionally, sequence-specific RNA-binding protein which participates in the control of pre-mRNA splicing. The protein is Transformer-2 protein homolog (tra2) of Dictyostelium discoideum (Social amoeba).